Reading from the N-terminus, the 390-residue chain is uncharacterized protein (390 aa).

This is an uncharacterized protein from Acanthamoeba polyphaga (Amoeba).